A 171-amino-acid chain; its full sequence is Lipoprotein signal peptidase (171 aa).

A run of 3 helical transmembrane segments spans residues 12–32 (WYWV…WVLA), 67–87 (WQRW…TVWL), and 93–113 (SLLK…GNLV). Catalysis depends on residues Asp123 and Asp141. A helical transmembrane segment spans residues 137–157 (FNIADSAICIGAVLIIWDAFL).

Belongs to the peptidase A8 family.

The protein localises to the cell inner membrane. The enzyme catalyses Release of signal peptides from bacterial membrane prolipoproteins. Hydrolyzes -Xaa-Yaa-Zaa-|-(S,diacylglyceryl)Cys-, in which Xaa is hydrophobic (preferably Leu), and Yaa (Ala or Ser) and Zaa (Gly or Ala) have small, neutral side chains.. It participates in protein modification; lipoprotein biosynthesis (signal peptide cleavage). This protein specifically catalyzes the removal of signal peptides from prolipoproteins. The protein is Lipoprotein signal peptidase of Shewanella baltica (strain OS223).